The chain runs to 331 residues: 2-keto-3-deoxygluconate permease (331 aa).

Transmembrane regions (helical) follow at residues 10-30 (IPGG…TLAP), 42-62 (GMIS…GASI), 77-97 (LVLT…MFIP), 100-120 (GIQT…AMDM), 141-161 (AFVL…LGSA), 163-183 (LASF…IGFA), 200-220 (PVLI…NVIM), 224-244 (LLGI…LIIA), 254-274 (TAGV…MIIA), and 289-309 (ALVA…TALY).

Belongs to the KdgT transporter family.

It localises to the cell inner membrane. It catalyses the reaction 2-dehydro-3-deoxy-D-gluconate(in) + H(+)(in) = 2-dehydro-3-deoxy-D-gluconate(out) + H(+)(out). Catalyzes the proton-dependent uptake of 2-keto-3-deoxygluconate (KDG) into the cell. The chain is 2-keto-3-deoxygluconate permease from Enterobacter sp. (strain 638).